We begin with the raw amino-acid sequence, 542 residues long: Putative DEAD-box ATP-dependent RNA helicase 43 (542 aa).

The short motif at 97–125 (KNFMDMKFPSPLLRMLKDKGIMHPTPIQV) is the Q motif element. A Helicase ATP-binding domain is found at 128-312 (LPVVLSGRDM…TSALVKPVTV (185 aa)). An ATP-binding site is contributed by 141-148 (AFTGSGKT). A DEAD box motif is present at residues 260–263 (DEAD). Residues 323-483 (DVIQEVEYVK…RIPPVLAELN (161 aa)) enclose the Helicase C-terminal domain. The CCHC-type zinc finger occupies 499-516 (KGCAYCGGLGHRILQCPK).

It belongs to the DEAD box helicase family. DDX41 subfamily.

It catalyses the reaction ATP + H2O = ADP + phosphate + H(+). The sequence is that of Putative DEAD-box ATP-dependent RNA helicase 43 (RH43) from Arabidopsis thaliana (Mouse-ear cress).